The sequence spans 679 residues: Glycine--tRNA ligase beta subunit (679 aa).

The protein belongs to the class-II aminoacyl-tRNA synthetase family. Tetramer of two alpha and two beta subunits.

It localises to the cytoplasm. The catalysed reaction is tRNA(Gly) + glycine + ATP = glycyl-tRNA(Gly) + AMP + diphosphate. The protein is Glycine--tRNA ligase beta subunit of Streptococcus agalactiae serotype Ia (strain ATCC 27591 / A909 / CDC SS700).